The sequence spans 377 residues: Chaperone protein DnaJ (377 aa).

In terms of domain architecture, J spans 6 to 70; the sequence is DYYKILGIDK…EKKAIYDKYG (65 aa). The segment at 143–225 adopts a CR-type zinc-finger fold; it reads GRVISQKLDK…CKGAKKIKES (83 aa). 8 residues coordinate Zn(2+): Cys156, Cys159, Cys173, Cys176, Cys199, Cys202, Cys213, and Cys216. CXXCXGXG motif repeat units lie at residues 156-163, 173-180, 199-206, and 213-220; these read CESCNGTG, CSTCNGRG, CSTCNGLG, and CPSCKGAK.

This sequence belongs to the DnaJ family. In terms of assembly, homodimer. The cofactor is Zn(2+).

Its subcellular location is the cytoplasm. Functionally, participates actively in the response to hyperosmotic and heat shock by preventing the aggregation of stress-denatured proteins and by disaggregating proteins, also in an autonomous, DnaK-independent fashion. Unfolded proteins bind initially to DnaJ; upon interaction with the DnaJ-bound protein, DnaK hydrolyzes its bound ATP, resulting in the formation of a stable complex. GrpE releases ADP from DnaK; ATP binding to DnaK triggers the release of the substrate protein, thus completing the reaction cycle. Several rounds of ATP-dependent interactions between DnaJ, DnaK and GrpE are required for fully efficient folding. Also involved, together with DnaK and GrpE, in the DNA replication of plasmids through activation of initiation proteins. The polypeptide is Chaperone protein DnaJ (Mycoplasmopsis pulmonis (strain UAB CTIP) (Mycoplasma pulmonis)).